Reading from the N-terminus, the 1020-residue chain is Sodium/potassium-transporting ATPase subunit alpha-2 (1020 aa).

Residues 1-5 constitute a propeptide that is removed on maturation; it reads MGRGA. Residues 1–31 are disordered; it reads MGRGAGREYSPAATTAENGGGKKKQKEKELD. At 6–85 the chain is on the cytoplasmic side; the sequence is GREYSPAATT…NALTPPPTTP (80 aa). Ser10 carries the phosphoserine modification. Residues 80–82 form an interaction with phosphoinositide-3 kinase region; the sequence is PPP. Residues 86–106 form a helical membrane-spanning segment; sequence EWVKFCRQLFGGFSILLWIGA. Over 107-129 the chain is Extracellular; the sequence is ILCFLAYGIQAAMEDEPSNDNLY. Residues 130-150 traverse the membrane as a helical segment; it reads LGVVLAAVVIVTGCFSYYQEA. Topologically, residues 151–286 are cytoplasmic; the sequence is KSSKIMDSFK…VGRTPIAMEI (136 aa). The segment covering 212–227 has biased composition (polar residues); the sequence is DNSSLTGESEPQTRSP. The segment at 212-231 is disordered; sequence DNSSLTGESEPQTRSPEFTH. A helical transmembrane segment spans residues 287–306; sequence EHFIQLITGVAVFPGVSFFV. Over 307–318 the chain is Extracellular; the sequence is LSLILGYSWLEA. A helical membrane pass occupies residues 319 to 336; the sequence is VIFLIGIIVANVPEGLLA. Topologically, residues 337–769 are cytoplasmic; the sequence is TVTVCLTLTA…EEGRLVFDNL (433 aa). Asp374 functions as the 4-aspartylphosphate intermediate in the catalytic mechanism. Ser439, Ser450, Ser496, and Ser559 each carry phosphoserine. Residue Thr570 is modified to Phosphothreonine. Residues Ser587 and Ser672 each carry the phosphoserine modification. Residues Asp714 and Asp718 each coordinate Mg(2+). Residues 770-789 traverse the membrane as a helical segment; the sequence is KKSIAYTLTSNIPEITPFLL. Topologically, residues 790–799 are extracellular; that stretch reads FIIANIPLPL. Residues 800–820 form a helical membrane-spanning segment; sequence GTVTILCIDLGTDMVPAISLA. Residues 821–840 lie on the Cytoplasmic side of the membrane; that stretch reads YEAAESDIMKRQPRNSQTDK. At Ser826 the chain carries Phosphoserine. A helical transmembrane segment spans residues 841 to 863; that stretch reads LVNERLISMAYGQIGMIQALGGF. Residues 864 to 915 lie on the Extracellular side of the membrane; that stretch reads FTYFVILAENGFLPSRLLGIRLDWDDRTMNDLEDSYGQEWTYEQRKVVEFTC. Residues 916–935 form a helical membrane-spanning segment; sequence HTAFFASIVVVQWADLIICK. At 936 to 948 the chain is on the cytoplasmic side; sequence TRRNSVFQQGMKN. A Phosphoserine; by PKA modification is found at Ser940. The chain crosses the membrane as a helical span at residues 949–967; the sequence is KILIFGLLEETALAAFLSY. The Extracellular segment spans residues 968-982; sequence CPGMGVALRMYPLKV. Residues 983–1003 form a helical membrane-spanning segment; it reads TWWFCAFPYSLLIFIYDEVRK. The Cytoplasmic portion of the chain corresponds to 1004 to 1020; sequence LILRRYPGGWVEKETYY.

Belongs to the cation transport ATPase (P-type) (TC 3.A.3) family. Type IIC subfamily. In terms of assembly, the sodium/potassium-transporting ATPase is composed of a catalytic alpha subunit, an auxiliary non-catalytic beta subunit and an additional regulatory subunit. Interacts with regulatory subunit FXYD1.

The protein localises to the membrane. It is found in the cell membrane. The enzyme catalyses K(+)(out) + Na(+)(in) + ATP + H2O = K(+)(in) + Na(+)(out) + ADP + phosphate + H(+). Its function is as follows. This is the catalytic component of the active enzyme, which catalyzes the hydrolysis of ATP coupled with the exchange of sodium and potassium ions across the plasma membrane. This action creates the electrochemical gradient of sodium and potassium, providing the energy for active transport of various nutrients. The polypeptide is Sodium/potassium-transporting ATPase subunit alpha-2 (ATP1A2) (Pongo abelii (Sumatran orangutan)).